A 356-amino-acid polypeptide reads, in one-letter code: Peptide chain release factor 1 (356 aa).

N5-methylglutamine is present on Gln-234.

It belongs to the prokaryotic/mitochondrial release factor family. Methylated by PrmC. Methylation increases the termination efficiency of RF1.

The protein resides in the cytoplasm. Functionally, peptide chain release factor 1 directs the termination of translation in response to the peptide chain termination codons UAG and UAA. The chain is Peptide chain release factor 1 from Parafrankia sp. (strain EAN1pec).